The primary structure comprises 1771 residues: Myosin-H heavy chain (1771 aa).

The Myosin N-terminal SH3-like domain maps to 7–57 (CGKEKVWVPNPEKGWINGDLIKEIPGEGWLVRDENGKEIKIEKDELRMQNP). Residues 61–840 (EGIDDMTSLS…IIANLELLRS (780 aa)) form the Myosin motor domain. 154 to 161 (GESGAGKT) provides a ligand contact to ATP. An actin-binding region spans residues 690–712 (LNSLMTTINSTNPHYIRCIKPNT). 3 consecutive IQ domains span residues 843-872 (MINS…SSIY), 866-895 (TKHS…ENSA), and 940-969 (RIKK…EAKS). 3 disordered regions span residues 1070–1176 (EKQH…NNVD), 1218–1282 (VKKS…PINM), and 1312–1343 (LNNG…KHIQ). Residues 1077 to 1111 (YKNNEVVGNTSFEGSTTTNNGVTSPPKSSPASPIR) are compositionally biased toward polar residues. Low complexity predominate over residues 1112–1139 (NSINSNSDTTISGSSDDSIDNTDSLILS). A compositionally biased stretch (basic and acidic residues) spans 1143 to 1153 (HKGEDRKRNHE). Residues 1180–1224 (RRQFNELEKEYKELKQMDETHKQYIESLKLQITQLEEKVKKSSSH) are a coiled coil. A compositionally biased stretch (low complexity) spans 1253 to 1281 (NSSSHHQQQQQQHNISPSNSITSTTSPIN). The region spanning 1427–1695 (TGVLDPIETN…LTSLMDSPKY (269 aa)) is the Dilute domain.

This sequence belongs to the TRAFAC class myosin-kinesin ATPase superfamily. Myosin family. In terms of assembly, myosin I heavy chain is single-headed. Dimer of a heavy and a light chain. Inability to self-assemble into filaments.

Its function is as follows. Myosin is a protein that binds to actin and has ATPase activity that is activated by actin. The chain is Myosin-H heavy chain (myoH) from Dictyostelium discoideum (Social amoeba).